We begin with the raw amino-acid sequence, 673 residues long: Fatty acyl-CoA synthetase B (673 aa).

The signal sequence occupies residues 1 to 18 (MINNWLAVGLLVVSGILA). N-linked (GlcNAc...) asparagine glycosylation occurs at N267.

The protein belongs to the ATP-dependent AMP-binding enzyme family.

The protein localises to the endoplasmic reticulum. The catalysed reaction is a long-chain fatty acid + ATP + CoA = a long-chain fatty acyl-CoA + AMP + diphosphate. In terms of biological role, long chain fatty acid acyl-CoA synthetases catalyze the formation of a thiester bond between a free fatty acid and coenzyme A during fatty acid metabolic process. This chain is Fatty acyl-CoA synthetase B (fcsB), found in Dictyostelium discoideum (Social amoeba).